We begin with the raw amino-acid sequence, 85 residues long: Putative membrane protein insertion efficiency factor (85 aa).

The protein belongs to the UPF0161 family.

The protein localises to the cell inner membrane. Could be involved in insertion of integral membrane proteins into the membrane. The polypeptide is Putative membrane protein insertion efficiency factor (Fervidobacterium nodosum (strain ATCC 35602 / DSM 5306 / Rt17-B1)).